Reading from the N-terminus, the 548-residue chain is MFS-type transporter TOXA (548 aa).

A compositionally biased stretch (polar residues) spans Met1 to Val12. The disordered stretch occupies residues Met1–Pro33. Basic and acidic residues predominate over residues Asp14–Val27. A run of 14 helical transmembrane segments spans residues Ile43–Ala63, Ala85–Gly105, Lys114–Ala134, Val146–Val166, Met177–Ala197, Trp204–Phe224, Ile250–Gly270, Val280–Trp300, Gly316–Tyr336, Met357–Phe377, Ala382–Phe402, Ile411–Ile431, Tyr444–Cys464, and Phe518–Ala538.

Belongs to the major facilitator superfamily. TCR/Tet family.

Its subcellular location is the membrane. Its function is as follows. MFS-type transporter; part of the diffuse TOX2 gene cluster that mediates the biosynthesis of the HC-toxin, cyclic tetrapeptide of structure cyclo(D-Pro-L-Ala-D-Ala-L-Aeo), where Aeo stands for 2-amino-9,10-epoxi-8-oxodecanoic acid. HC-toxin is a determinant of specificity and virulence in the interaction between the producing fungus and its host, maize. TOXA acts as a HC-toxin efflux pump which contributes to self-protection against HC-toxin and/or the secretion of HC-toxin into the extracellular milieu. The polypeptide is MFS-type transporter TOXA (Cochliobolus carbonum (Maize leaf spot fungus)).